A 206-amino-acid chain; its full sequence is Large ribosomal subunit protein uL4 (206 aa).

The tract at residues 43–78 (ARSGNRKQKDREEVKHTTKKPWRQKGTGRARAGMSS) is disordered. Positions 49–58 (KQKDREEVKH) are enriched in basic and acidic residues. Positions 59–70 (TTKKPWRQKGTG) are enriched in basic residues.

This sequence belongs to the universal ribosomal protein uL4 family. As to quaternary structure, part of the 50S ribosomal subunit.

Functionally, one of the primary rRNA binding proteins, this protein initially binds near the 5'-end of the 23S rRNA. It is important during the early stages of 50S assembly. It makes multiple contacts with different domains of the 23S rRNA in the assembled 50S subunit and ribosome. Forms part of the polypeptide exit tunnel. The chain is Large ribosomal subunit protein uL4 from Ralstonia nicotianae (strain ATCC BAA-1114 / GMI1000) (Ralstonia solanacearum).